Here is a 306-residue protein sequence, read N- to C-terminus: GTPase IMAP family member 1 (306 aa).

Residues 1 to 21 are disordered; sequence MGGRKMATDEENVYGLEENAQ. At 1–272 the chain is on the cytoplasmic side; it reads MGGRKMATDE…RLWKWLKSPR (272 aa). The AIG1-type G domain maps to 25 to 229; it reads ESTRRLILVG…YSNEVYELAQ (205 aa). A G1 region spans residues 34-41; the sequence is GRTGAGKS. Residues 34 to 42 and Ser55 each bind GTP; that span reads GRTGAGKSA. Positions 61–65 are G2; that stretch reads SVTRA. The segment at 82–85 is G3; sequence DTPD. The interval 152-155 is G4; it reads TRKE. Residues 153-155 and Asn190 contribute to the GTP site; that span reads RKE. Residues 189–191 form a G5 region; that stretch reads DNR. The chain crosses the membrane as a helical; Anchor for type IV membrane protein span at residues 273-292; sequence SWRLGLALLLGGALLFWVLL. Topologically, residues 293 to 306 are lumenal; sequence HRRWSEAVAEVGPD.

Belongs to the TRAFAC class TrmE-Era-EngA-EngB-Septin-like GTPase superfamily. AIG1/Toc34/Toc159-like paraseptin GTPase family. IAN subfamily. As to expression, predominantly expressed in the spleen and to a lesser extent in the lymph nodes. Detected in T-cells.

It localises to the endoplasmic reticulum membrane. It is found in the golgi apparatus membrane. May regulate lymphocyte survival. Required for normal levels of mature T-lymphocytes and mature B-cells. This is GTPase IMAP family member 1 (GIMAP1) from Homo sapiens (Human).